Consider the following 188-residue polypeptide: Elongation factor P (188 aa).

The protein belongs to the elongation factor P family.

The protein resides in the cytoplasm. It functions in the pathway protein biosynthesis; polypeptide chain elongation. In terms of biological role, involved in peptide bond synthesis. Stimulates efficient translation and peptide-bond synthesis on native or reconstituted 70S ribosomes in vitro. Probably functions indirectly by altering the affinity of the ribosome for aminoacyl-tRNA, thus increasing their reactivity as acceptors for peptidyl transferase. In Rickettsia africae (strain ESF-5), this protein is Elongation factor P.